The primary structure comprises 175 residues: MVNAEDLFINLAKSLLGDDVIDVLRVLLEKGTEMTDEEIANQLNIKVNDVRKKLNLLEEQGFVSYRKTRDKDSGWFIYYWKPNIDQINEILLNRKRLILDKLKSRLEYEKNNTFFICPQDNSRYSFEEAFENEFKCLKCGSQLTYYDTEKIKSFLEQKIRQIEEEIDKETKLWGK.

The HTH TFE/IIEalpha-type domain maps to 4–88 (AEDLFINLAK…YWKPNIDQIN (85 aa)).

The protein belongs to the TFE family. As to quaternary structure, monomer. Interaction with RNA polymerase subunits RpoF and RpoE is necessary for Tfe stimulatory transcription activity. Able to interact with Tbp and RNA polymerase in the absence of DNA promoter. Interacts both with the preinitiation and elongation complexes.

Its function is as follows. Transcription factor that plays a role in the activation of archaeal genes transcribed by RNA polymerase. Facilitates transcription initiation by enhancing TATA-box recognition by TATA-box-binding protein (Tbp), and transcription factor B (Tfb) and RNA polymerase recruitment. Not absolutely required for transcription in vitro, but particularly important in cases where Tbp or Tfb function is not optimal. It dynamically alters the nucleic acid-binding properties of RNA polymerases by stabilizing the initiation complex and destabilizing elongation complexes. Seems to translocate with the RNA polymerase following initiation and acts by binding to the non template strand of the transcription bubble in elongation complexes. In Saccharolobus islandicus (strain Y.N.15.51 / Yellowstone #2) (Sulfolobus islandicus), this protein is Transcription factor E.